Here is a 582-residue protein sequence, read N- to C-terminus: ATP-dependent lipid A-core flippase (582 aa).

Helical transmembrane passes span 16-36, 63-83, 153-173, 253-273, and 275-295; these read LWPTIAPFKAGLIVAGVALIL, VLVWMPLVVIGLMILRGITSY, IIGLFIMMFYYSWQLSIILIV, PIIQLIASLALAFVLYAASFP, and VMDSLTAGTITVVFSSMIALM. One can recognise an ABC transmembrane type-1 domain in the interval 28 to 310; it reads IVAGVALILN…LTNVNAQFQR (283 aa). Positions 342-578 constitute an ABC transporter domain; sequence VEFRNVTFTY…RGVYAQLHKM (237 aa). 376–383 is a binding site for ATP; the sequence is GRSGSGKS.

The protein belongs to the ABC transporter superfamily. Lipid exporter (TC 3.A.1.106) family. In terms of assembly, homodimer.

The protein localises to the cell inner membrane. It catalyses the reaction ATP + H2O + lipid A-core oligosaccharideSide 1 = ADP + phosphate + lipid A-core oligosaccharideSide 2.. In terms of biological role, involved in lipopolysaccharide (LPS) biosynthesis. Translocates lipid A-core from the inner to the outer leaflet of the inner membrane. Transmembrane domains (TMD) form a pore in the inner membrane and the ATP-binding domain (NBD) is responsible for energy generation. The chain is ATP-dependent lipid A-core flippase from Escherichia coli O157:H7.